The following is a 346-amino-acid chain: GPALPP motifs-containing protein 1 (346 aa).

Disordered stretches follow at residues 1 to 283 and 289 to 308; these read MARD…ESLM and KLKSKAAEDKNKHQERIPFD. Residue alanine 2 is modified to N-acetylalanine. A GPALPP motif 1 motif is present at residues 7 to 12; sequence GPALPP. The residue at position 28 (serine 28) is a Phosphoserine. Residues 32–37 carry the GPALPP motif 2 motif; the sequence is GPALPP. Positions 60–69 are enriched in acidic residues; it reads GNQESEEEDT. Positions 91-96 match the GPALPP motif 3 motif; it reads GPALPP. Phosphoserine is present on serine 104. Pro residues predominate over residues 106-115; that stretch reads PRPIIGPALP. The short motif at 111–116 is the GPALPP motif 4 element; it reads GPALPP. Over residues 123–132 the composition is skewed to basic and acidic residues; that stretch reads QKNDKGREDP. Serine 136, serine 141, and serine 146 each carry phosphoserine. A compositionally biased stretch (acidic residues) spans 142 to 152; sequence EEAESGEDEDI. 2 stretches are compositionally biased toward basic and acidic residues: residues 169 to 193 and 233 to 267; these read EFEKRAQRMKEKLTKGDDDSSKPIT and PADRERKAKEIQEARKSFSKKDEENILSGRDKRLA. Lysine 277 participates in a covalent cross-link: Glycyl lysine isopeptide (Lys-Gly) (interchain with G-Cter in SUMO2). Basic and acidic residues predominate over residues 293-308; sequence KAAEDKNKHQERIPFD. A Glycyl lysine isopeptide (Lys-Gly) (interchain with G-Cter in SUMO2) cross-link involves residue lysine 314.

The chain is GPALPP motifs-containing protein 1 (Gpalpp1) from Mus musculus (Mouse).